The following is a 368-amino-acid chain: Abasic site processing protein YMR114C (368 aa).

The active-site Nucleophile is the C2. C2 carries the thiazolidine linkage to a ring-opened DNA abasic site modification. Residues 25-48 (VNTPKDASSNSQHPHDEEDTKDQP) form a disordered region. The span at 37–46 (HPHDEEDTKD) shows a compositional bias: basic and acidic residues. The active site involves E132. The tract at residues 270-368 (LENDNEQGID…DSRGKKKIKK (99 aa)) is disordered. Composition is skewed to basic and acidic residues over residues 281–296 (RGVK…DVFN), 304–313 (NSYDGLKKNE), and 326–349 (IGDR…EKRN). S338 is modified (phosphoserine).

It belongs to the SOS response-associated peptidase family.

It localises to the chromosome. Its activity is regulated as follows. Formation and reversal of DNA-protein cross-link depends on DNA context. Catalyzes formation of the thiazolidine linkage in presence of abasic sites in single-stranded DNA. Mediates the reversal of the thiazolidine cross-link in presence of double stranded DNA. Sensor of abasic sites in single-stranded DNA (ssDNA) required to preserve genome integrity by promoting error-free repair of abasic sites. Recognizes and binds abasic sites in ssDNA at replication forks and chemically modifies the lesion by forming a covalent cross-link with DNA: forms a stable thiazolidine linkage between a ring-opened abasic site and the alpha-amino and sulfhydryl substituents of its N-terminal catalytic cysteine residue. The DNA-protein cross-link is then reversed: able to catalyze the reversal of the thiazolidine cross-link and cycle between a cross-link and a non-cross-linked state depending on DNA context: mediates self-reversal of the thiazolidine cross-link in double stranded DNA. Acts as a protease: mediates autocatalytic processing of its N-terminal methionine in order to expose the catalytic cysteine. This Saccharomyces cerevisiae (strain ATCC 204508 / S288c) (Baker's yeast) protein is Abasic site processing protein YMR114C.